Consider the following 501-residue polypeptide: Neuronal acetylcholine receptor subunit beta-2 (501 aa).

An N-terminal signal peptide occupies residues 1–25 (MARCSNSMALLFSFGLLWLCSGVLG). Topologically, residues 26–238 (TDTEERLVEH…IIRRKPLFYT (213 aa)) are extracellular. Asn-51 and Asn-168 each carry an N-linked (GlcNAc...) asparagine glycan. A disulfide bridge connects residues Cys-155 and Cys-169. A helical transmembrane segment spans residues 239–259 (INLIIPCVLITSLAILVFYLP). The Cytoplasmic segment spans residues 260-267 (SDCGEKMT). Residues 268–288 (LCISVLLALTVFLLLISKIVP) traverse the membrane as a helical segment. The Extracellular segment spans residues 289–300 (PTSLDVPLVGKY). Residues 301-321 (LMFTMVLVTFSIVTSVCVLNV) traverse the membrane as a helical segment. At 322-459 (HHRSPTTHTM…WKYVAMVIDR (138 aa)) the chain is on the cytoplasmic side. The helical transmembrane segment at 460–480 (LFLWIFVFVCVFGTIGMFLQP) threads the bilayer.

This sequence belongs to the ligand-gated ion channel (TC 1.A.9) family. Acetylcholine receptor (TC 1.A.9.1) subfamily. Beta-2/CHRNB2 sub-subfamily. In terms of assembly, neuronal AChR is a heteropentamer composed of two different types of subunits: alpha and beta. CHRNB2/Beta-2 subunit can be combined to CHRNA2/alpha-2, CHRNA3/alpha-3 or CHRNA4/alpha-4, CHRNA5/alpha-5, CHRNA6/alpha-6 and CHRNB3/beta-3 to give rise to functional receptors. CHRNA2:CHRNB2 and CHRNA4:CHRNB2 nAChR complexes exist in two subtypes: LS (low agonist sensitivity) with a (CHRNA2/4)3:(CHRNB2)2 and HS (high agonist sensitivity) with a (CHRNA2/4)2:(CHRNB2)3 stoichiometry; the subtypes differ in their subunit binding interfaces which are involved in ligand binding. Cells produce predominantly an (CHRNA4)3:(CHRNB2)2 nAChR. The stoichiometric form (CHRNA4)2:(CHRNB2)3 expression is selectively up-regulated by nicotine and has lower single channel conductance and calcium permeability. Also part of the stoichiometric forms: (CHRNA4:CHRNB2)2:CHRNB3 or (CHRNA6:CHRNB2)2:CHRNB3. Can form heteropentamers with CHRNA7, mainly found in basal forebrain cholinergic neurons. Interacts with RIC3; which is required for proper folding and assembly. Interacts with LYPD6.

It is found in the synaptic cell membrane. Its subcellular location is the cell membrane. It carries out the reaction K(+)(in) = K(+)(out). It catalyses the reaction Na(+)(in) = Na(+)(out). The catalysed reaction is Ca(2+)(in) = Ca(2+)(out). Its activity is regulated as follows. Activated by a myriad of ligands such as acetylcholine, cytisine, nicotine, choline and epibatidine. Channel potentiation by calcium is stoichiometry-selective, CHRNA4:CHRNB2 nACh receptor is achieved by calcium association with topographically distinct sites framed by anionic residues within the CHRNA4 subunit and between the CHRNA4 and CHRNB2 subunits. Oligomeric amyloid-beta protein 42 activates specifially CHRNA7:CHRNB2 nAchRs. nAChR activity is inhibited by the antagonist alpha-conotoxins BuIA, PnIA, PnIC, GID and MII, small disulfide-constrained peptides from cone snails. Component of neuronal acetylcholine receptors (nAChRs) that function as pentameric, ligand-gated cation channels with high calcium permeability among other activities. nAChRs are excitatory neurotrasnmitter receptors formed by a collection of nAChR subunits known to mediate synaptic transmission in the nervous system and the neuromuscular junction. Each nAchR subunit confers differential attributes to channel properties, including activation, deactivation and desensitization kinetics, pH sensitivity, cation permeability, and binding to allosteric modulators. CHRNB2 forms heteropentameric neuronal acetylcholine receptors with CHRNA2, CHRNA3, CHRNA4 and CHRNA6, as well as CHRNA5 and CHRNB3 as accesory subunits. Found in two major stoichiometric forms,(CHRNA4)3:(CHRNB2)2 and (CHRNA4)2:(CHRNB2)3, the two stoichiometric forms differ in their unitary conductance, calcium permeability, ACh sensitivity and potentiation by divalent cation. Heteropentameric channels with CHRNA6 and CHRNA4 exhibit high sensitivity to ACh and nicotine and are predominantly expressed in only a few brain areas, including dopaminergic neurons, norepirephrine neurons and cells of the visual system. nAChrs containing CHRNA6 subunits mediate endogenous cholinergic modulation of dopamine and gamma-aminobutyric acid (GABA) release in response to nicotine at nerve terminals. Also forms functional nAChRs with other subunits such as CHRNA7:CHRNB2, mainly expressed in basal forebrain cholinergic neurons. The protein is Neuronal acetylcholine receptor subunit beta-2 (Chrnb2) of Mus musculus (Mouse).